We begin with the raw amino-acid sequence, 369 residues long: Olfactory receptor 2T1 (369 aa).

Over 1–76 the chain is Extracellular; sequence MWQEYYFLNV…LFNRKETSGL (76 aa). A glycan (N-linked (GlcNAc...) asparagine) is linked at N56. The helical transmembrane segment at 77–97 threads the bilayer; the sequence is IFAIISIIFFTALMANGVMIF. Over 98-107 the chain is Cytoplasmic; it reads LIQTDLRLHT. A helical membrane pass occupies residues 108–128; sequence PMYFLLSHLSLIDMMYISTIV. Residues 129 to 148 lie on the Extracellular side of the membrane; it reads PKMLVNYLLDQRTISFVGCT. Residues C147 and C239 are joined by a disulfide bond. Residues 149–169 traverse the membrane as a helical segment; sequence AQHFLYLTLVGAEFFLLGLMA. Residues 170–191 lie on the Cytoplasmic side of the membrane; sequence YDRYVAICNPLRYPVLMSRRVC. A helical membrane pass occupies residues 192–212; that stretch reads WMIIAGSWFGGSLDGFLLTPI. At 213–247 the chain is on the extracellular side; sequence TMSFPFCNSREINHFFCEAPAVLKLACADTALYET. Residues 248 to 268 form a helical membrane-spanning segment; that stretch reads VMYVCCVLMLLIPFSVVLASY. Topologically, residues 269–286 are cytoplasmic; that stretch reads ARILTTVQCMSSVEGRKK. A helical transmembrane segment spans residues 287 to 307; it reads AFATCSSHMTVVSLFYGAAMY. The Extracellular segment spans residues 308 to 321; the sequence is TYMLPHSYHKPAQD. The chain crosses the membrane as a helical span at residues 322–342; it reads KVLSVFYTILTPMLNPLIYSL. Topologically, residues 343-369 are cytoplasmic; the sequence is RNKDVTGALKRALGRFKGPQRVSGGVF.

This sequence belongs to the G-protein coupled receptor 1 family.

The protein resides in the cell membrane. Odorant receptor. This is Olfactory receptor 2T1 (OR2T1) from Homo sapiens (Human).